A 28-amino-acid polypeptide reads, in one-letter code: Nicotinic acetylcholine receptor-binding protein Mnn-3C (28 aa).

A disulfide bridge connects residues Cys-3 and Cys-24.

Belongs to the three-finger toxin family. Short-chain subfamily. In terms of tissue distribution, expressed by the venom gland.

It is found in the secreted. Binds and may inhibit nicotinic acetylcholine receptors (nAChR). The protein is Nicotinic acetylcholine receptor-binding protein Mnn-3C of Micrurus nigrocinctus (Central American coral snake).